A 311-amino-acid polypeptide reads, in one-letter code: Porphobilinogen deaminase (311 aa).

At cysteine 240 the chain carries S-(dipyrrolylmethanemethyl)cysteine.

It belongs to the HMBS family. In terms of assembly, monomer. Dipyrromethane serves as cofactor.

It carries out the reaction 4 porphobilinogen + H2O = hydroxymethylbilane + 4 NH4(+). Its pathway is porphyrin-containing compound metabolism; protoporphyrin-IX biosynthesis; coproporphyrinogen-III from 5-aminolevulinate: step 2/4. Tetrapolymerization of the monopyrrole PBG into the hydroxymethylbilane pre-uroporphyrinogen in several discrete steps. In Natranaerobius thermophilus (strain ATCC BAA-1301 / DSM 18059 / JW/NM-WN-LF), this protein is Porphobilinogen deaminase.